The chain runs to 427 residues: GTPase Obg (427 aa).

Positions 1-158 (MFIDKAKIHL…LTVTLELKLI (158 aa)) constitute an Obg domain. Positions 159–330 (ADVGLVGFPN…LLDYVSIKLK (172 aa)) constitute an OBG-type G domain. GTP-binding positions include 165 to 172 (GFPNVGKS), 190 to 194 (FTTLT), 212 to 215 (DIPG), 282 to 285 (NKTD), and 311 to 313 (SAA). Mg(2+) is bound by residues Ser-172 and Thr-192. In terms of domain architecture, OCT spans 347–427 (LYELKEKDTN…IYDVEFEYFH (81 aa)).

Belongs to the TRAFAC class OBG-HflX-like GTPase superfamily. OBG GTPase family. As to quaternary structure, monomer. Requires Mg(2+) as cofactor.

Its subcellular location is the cytoplasm. Its function is as follows. An essential GTPase which binds GTP, GDP and possibly (p)ppGpp with moderate affinity, with high nucleotide exchange rates and a fairly low GTP hydrolysis rate. Plays a role in control of the cell cycle, stress response, ribosome biogenesis and in those bacteria that undergo differentiation, in morphogenesis control. The chain is GTPase Obg from Alkaliphilus metalliredigens (strain QYMF).